The chain runs to 1028 residues: Ubiquitin conjugation factor E4 A (1028 aa).

Residues 33–57 (KEQLKQQSDELPASPDDSDNSVSES) form a disordered region. An N6-acetyllysine modification is found at K386. A U-box domain is found at 949–1023 (DACDEFLDPI…QRWLAERKQQ (75 aa)).

The protein belongs to the ubiquitin conjugation factor E4 family. As to expression, expressed in liver, heart, brain, kidney and testis.

It localises to the cytoplasm. It carries out the reaction S-ubiquitinyl-[E2 ubiquitin-conjugating enzyme]-L-cysteine + [acceptor protein]-L-lysine = [E2 ubiquitin-conjugating enzyme]-L-cysteine + N(6)-ubiquitinyl-[acceptor protein]-L-lysine.. It functions in the pathway protein modification; protein ubiquitination. Its function is as follows. Ubiquitin-protein ligase that probably functions as an E3 ligase in conjunction with specific E1 and E2 ligases. May also function as an E4 ligase mediating the assembly of polyubiquitin chains on substrates ubiquitinated by another E3 ubiquitin ligase. Mediates 'Lys-48'-linked polyubiquitination of substrates. In Mus musculus (Mouse), this protein is Ubiquitin conjugation factor E4 A.